Consider the following 344-residue polypeptide: Phosphoribosylformylglycinamidine cyclo-ligase (344 aa).

Belongs to the AIR synthase family.

Its subcellular location is the cytoplasm. It carries out the reaction 2-formamido-N(1)-(5-O-phospho-beta-D-ribosyl)acetamidine + ATP = 5-amino-1-(5-phospho-beta-D-ribosyl)imidazole + ADP + phosphate + H(+). It functions in the pathway purine metabolism; IMP biosynthesis via de novo pathway; 5-amino-1-(5-phospho-D-ribosyl)imidazole from N(2)-formyl-N(1)-(5-phospho-D-ribosyl)glycinamide: step 2/2. This Haemophilus influenzae (strain PittEE) protein is Phosphoribosylformylglycinamidine cyclo-ligase.